Here is a 394-residue protein sequence, read N- to C-terminus: uncharacterized protein (394 aa).

Helical transmembrane passes span 10–30 (PALI…NYYA), 50–70 (FIVT…VPLG), 79–99 (IVSM…SQSL), 100–120 (AMMI…QILV), 138–158 (TIMS…GLLA), 166–186 (VFWV…RGLP), 218–238 (LLGC…AFLL), 243–263 (FNYS…GALG), 291–311 (WLAI…ILVL), 337–357 (LTAG…LISA), and 364–384 (GWAG…LVWW).

Belongs to the major facilitator superfamily.

Its subcellular location is the cell inner membrane. This is an uncharacterized protein from Escherichia coli O157:H7.